We begin with the raw amino-acid sequence, 385 residues long: MKKPIIEFKNVSKVFEDNNTVVLKDINFELEEGKFYTLLGSSGSGKSTILNIIAGLLDATDGDIFLDGVRINDIPTNKRDVHTVFQSYALFPHMNVFENVAFPLRLRKVDKKEIQERVTEVLKMVQLEGFERRSIRKLSGGQRQRVAIARAIINQPRVVLLDEPLSALDLKLRTDMQYELRELQQRLGITFVFVTHDQEEALAMSDWIFVMNDGEIVQSGTPVDIYDEPINHFVATFIGESNILPGKMIEDYLVEFNGKRFEAVDGGMRPNESVEVVIRPEDLRITLPEEGKLQVKVDTQLFRGVHYEIIAYDELGNEWMIHSTRKAIVGEEIGLHFEPEDIHIMRLNETEEEFDARIEEYVEVEEQEAGLINAIEEERDEENNL.

Positions 6–238 constitute an ABC transporter domain; that stretch reads IEFKNVSKVF…PINHFVATFI (233 aa). ATP is bound at residue 40–47; sequence GSSGSGKS.

The protein belongs to the ABC transporter superfamily. Spermidine/putrescine importer (TC 3.A.1.11.1) family. In terms of assembly, the complex is composed of two ATP-binding proteins (PotA), two transmembrane proteins (PotB and PotC) and a solute-binding protein (PotD).

The protein localises to the cell membrane. It carries out the reaction ATP + H2O + polyamine-[polyamine-binding protein]Side 1 = ADP + phosphate + polyamineSide 2 + [polyamine-binding protein]Side 1.. Its function is as follows. Part of the ABC transporter complex PotABCD involved in spermidine/putrescine import. Responsible for energy coupling to the transport system. In Streptococcus sanguinis (strain SK36), this protein is Spermidine/putrescine import ATP-binding protein PotA.